The sequence spans 245 residues: 1-(5-phosphoribosyl)-5-[(5-phosphoribosylamino)methylideneamino] imidazole-4-carboxamide isomerase (245 aa).

D8 acts as the Proton acceptor in catalysis. D130 functions as the Proton donor in the catalytic mechanism.

It belongs to the HisA/HisF family.

It localises to the cytoplasm. The catalysed reaction is 1-(5-phospho-beta-D-ribosyl)-5-[(5-phospho-beta-D-ribosylamino)methylideneamino]imidazole-4-carboxamide = 5-[(5-phospho-1-deoxy-D-ribulos-1-ylimino)methylamino]-1-(5-phospho-beta-D-ribosyl)imidazole-4-carboxamide. It participates in amino-acid biosynthesis; L-histidine biosynthesis; L-histidine from 5-phospho-alpha-D-ribose 1-diphosphate: step 4/9. In Marinobacter nauticus (strain ATCC 700491 / DSM 11845 / VT8) (Marinobacter aquaeolei), this protein is 1-(5-phosphoribosyl)-5-[(5-phosphoribosylamino)methylideneamino] imidazole-4-carboxamide isomerase.